The following is a 37-amino-acid chain: Large ribosomal subunit protein bL36c (37 aa).

Belongs to the bacterial ribosomal protein bL36 family.

The protein localises to the plastid. The protein resides in the chloroplast. In Oltmannsiellopsis viridis (Marine flagellate), this protein is Large ribosomal subunit protein bL36c.